The sequence spans 116 residues: Large ribosomal subunit protein bL19 (116 aa).

This sequence belongs to the bacterial ribosomal protein bL19 family.

This protein is located at the 30S-50S ribosomal subunit interface and may play a role in the structure and function of the aminoacyl-tRNA binding site. This chain is Large ribosomal subunit protein bL19, found in Pseudomonas putida (strain ATCC 700007 / DSM 6899 / JCM 31910 / BCRC 17059 / LMG 24140 / F1).